A 161-amino-acid chain; its full sequence is MPDELRAEKSFPSKPYDSLKNKSEFDRVYRKGFKKHNPFFSLFVLDLSKEPPKEKEGFKDPLSCRLKDRNTLCLLGLSVSKKVGNAVKRNLIKRRLRSLVTRHAALCQGFALVFVPRSDCYHLDFWALEKHFLEMLTSIKDYMNKALKDLKKGMTHTHAKQ.

This sequence belongs to the RnpA family. In terms of assembly, consists of a catalytic RNA component (M1 or rnpB) and a protein subunit.

It catalyses the reaction Endonucleolytic cleavage of RNA, removing 5'-extranucleotides from tRNA precursor.. In terms of biological role, RNaseP catalyzes the removal of the 5'-leader sequence from pre-tRNA to produce the mature 5'-terminus. It can also cleave other RNA substrates such as 4.5S RNA. The protein component plays an auxiliary but essential role in vivo by binding to the 5'-leader sequence and broadening the substrate specificity of the ribozyme. This chain is Ribonuclease P protein component, found in Helicobacter pylori (strain J99 / ATCC 700824) (Campylobacter pylori J99).